We begin with the raw amino-acid sequence, 284 residues long: Putative cysteine-rich repeat secretory protein 7 (284 aa).

The first 24 residues, 1-24 (MARIILTAPLFYFFFSLLSHQTMS), serve as a signal peptide directing secretion. 2 Gnk2-homologous domains span residues 26–128 (PQHM…NVSF) and 134–244 (SKPV…TFVL). The interval 247-284 (PAPSPSSLPPISPTSSPPLSLPPQLPPPLSQPPPPLST) is disordered.

Belongs to the cysteine-rich repeat secretory protein family.

Its subcellular location is the secreted. This chain is Putative cysteine-rich repeat secretory protein 7 (CRRSP7), found in Arabidopsis thaliana (Mouse-ear cress).